The primary structure comprises 383 residues: 2-aminoethylphosphonate--pyruvate transaminase (383 aa).

The residue at position 192 (Lys-192) is an N6-(pyridoxal phosphate)lysine.

It belongs to the class-V pyridoxal-phosphate-dependent aminotransferase family. PhnW subfamily. As to quaternary structure, homodimer. Requires pyridoxal 5'-phosphate as cofactor.

The enzyme catalyses (2-aminoethyl)phosphonate + pyruvate = phosphonoacetaldehyde + L-alanine. In terms of biological role, involved in phosphonate degradation. This Rhizobium meliloti (strain 1021) (Ensifer meliloti) protein is 2-aminoethylphosphonate--pyruvate transaminase.